A 619-amino-acid polypeptide reads, in one-letter code: 1-deoxy-D-xylulose-5-phosphate synthase (619 aa).

Thiamine diphosphate contacts are provided by residues His-63 and 104–106 (GHS). Residue Asp-136 participates in Mg(2+) binding. Residues 137–138 (GS), Asn-165, Tyr-272, and Glu-353 each bind thiamine diphosphate. Asn-165 is a Mg(2+) binding site.

Belongs to the transketolase family. DXPS subfamily. In terms of assembly, homodimer. The cofactor is Mg(2+). Requires thiamine diphosphate as cofactor.

The catalysed reaction is D-glyceraldehyde 3-phosphate + pyruvate + H(+) = 1-deoxy-D-xylulose 5-phosphate + CO2. It participates in metabolic intermediate biosynthesis; 1-deoxy-D-xylulose 5-phosphate biosynthesis; 1-deoxy-D-xylulose 5-phosphate from D-glyceraldehyde 3-phosphate and pyruvate: step 1/1. In terms of biological role, catalyzes the acyloin condensation reaction between C atoms 2 and 3 of pyruvate and glyceraldehyde 3-phosphate to yield 1-deoxy-D-xylulose-5-phosphate (DXP). This is 1-deoxy-D-xylulose-5-phosphate synthase from Wolinella succinogenes (strain ATCC 29543 / DSM 1740 / CCUG 13145 / JCM 31913 / LMG 7466 / NCTC 11488 / FDC 602W) (Vibrio succinogenes).